The primary structure comprises 528 residues: Phosphoenolpyruvate carboxykinase (ATP) (528 aa).

Substrate contacts are provided by Arg-56, Tyr-192, and Lys-198. Residues Lys-198, His-217, and 233–241 (GLSGTGKTT) contribute to the ATP site. Positions 198 and 217 each coordinate Mn(2+). A Mn(2+)-binding site is contributed by Asp-254. The ATP site is built by Glu-282, Arg-319, and Thr-444. Arg-319 contacts substrate.

The protein belongs to the phosphoenolpyruvate carboxykinase (ATP) family. The cofactor is Mn(2+).

It is found in the cytoplasm. The enzyme catalyses oxaloacetate + ATP = phosphoenolpyruvate + ADP + CO2. It functions in the pathway carbohydrate biosynthesis; gluconeogenesis. Its function is as follows. Involved in the gluconeogenesis. Catalyzes the conversion of oxaloacetate (OAA) to phosphoenolpyruvate (PEP) through direct phosphoryl transfer between the nucleoside triphosphate and OAA. The chain is Phosphoenolpyruvate carboxykinase (ATP) from Bacillus cereus (strain G9842).